A 204-amino-acid polypeptide reads, in one-letter code: Guanylate kinase (204 aa).

The region spanning 3-181 is the Guanylate kinase-like domain; sequence GTLYIVSASS…AVSEMSAIFT (179 aa). Residue 10–17 participates in ATP binding; the sequence is ASSGTGKS.

The protein belongs to the guanylate kinase family.

The protein localises to the cytoplasm. The catalysed reaction is GMP + ATP = GDP + ADP. Its function is as follows. Essential for recycling GMP and indirectly, cGMP. The protein is Guanylate kinase of Xylella fastidiosa (strain Temecula1 / ATCC 700964).